An 88-amino-acid chain; its full sequence is MANIKSQKKRILTNEKARQRNVAVKSELKTAIRAVDKAVAAGEAEAAAAALRTASRKLDKAASKGVIHKNQAANRKSGIAARVKALLG.

The protein belongs to the bacterial ribosomal protein bS20 family.

Its function is as follows. Binds directly to 16S ribosomal RNA. This is Small ribosomal subunit protein bS20 from Micrococcus luteus (strain ATCC 4698 / DSM 20030 / JCM 1464 / CCM 169 / CCUG 5858 / IAM 1056 / NBRC 3333 / NCIMB 9278 / NCTC 2665 / VKM Ac-2230) (Micrococcus lysodeikticus).